A 380-amino-acid polypeptide reads, in one-letter code: Lipid-A-disaccharide synthase (380 aa).

This sequence belongs to the LpxB family.

The catalysed reaction is a lipid X + a UDP-2-N,3-O-bis[(3R)-3-hydroxyacyl]-alpha-D-glucosamine = a lipid A disaccharide + UDP + H(+). Its pathway is bacterial outer membrane biogenesis; LPS lipid A biosynthesis. Condensation of UDP-2,3-diacylglucosamine and 2,3-diacylglucosamine-1-phosphate to form lipid A disaccharide, a precursor of lipid A, a phosphorylated glycolipid that anchors the lipopolysaccharide to the outer membrane of the cell. The polypeptide is Lipid-A-disaccharide synthase (Azotobacter vinelandii (strain DJ / ATCC BAA-1303)).